A 432-amino-acid chain; its full sequence is Gamma-glutamyl phosphate reductase (432 aa).

Belongs to the gamma-glutamyl phosphate reductase family.

It localises to the cytoplasm. It carries out the reaction L-glutamate 5-semialdehyde + phosphate + NADP(+) = L-glutamyl 5-phosphate + NADPH + H(+). It participates in amino-acid biosynthesis; L-proline biosynthesis; L-glutamate 5-semialdehyde from L-glutamate: step 2/2. Catalyzes the NADPH-dependent reduction of L-glutamate 5-phosphate into L-glutamate 5-semialdehyde and phosphate. The product spontaneously undergoes cyclization to form 1-pyrroline-5-carboxylate. The sequence is that of Gamma-glutamyl phosphate reductase from Methylorubrum extorquens (strain PA1) (Methylobacterium extorquens).